The chain runs to 514 residues: Na(+)/H(+) antiporter NhaB (514 aa).

12 helical membrane-spanning segments follow: residues L23–A43, P63–A83, L97–F117, L120–F140, F144–I164, L202–P222, F238–M258, A303–I323, L357–I377, L391–I411, A447–I467, and V475–F495.

It belongs to the NhaB Na(+)/H(+) (TC 2.A.34) antiporter family.

The protein resides in the cell inner membrane. The enzyme catalyses 2 Na(+)(in) + 3 H(+)(out) = 2 Na(+)(out) + 3 H(+)(in). Functionally, na(+)/H(+) antiporter that extrudes sodium in exchange for external protons. The sequence is that of Na(+)/H(+) antiporter NhaB from Salmonella paratyphi A (strain ATCC 9150 / SARB42).